Consider the following 301-residue polypeptide: tRNA dimethylallyltransferase (301 aa).

Residue 2–9 (GPTASGKT) participates in ATP binding. Residue 4-9 (TASGKT) participates in substrate binding. 2 interaction with substrate tRNA regions span residues 27 to 30 (DSAM) and 151 to 155 (QRIQR).

This sequence belongs to the IPP transferase family. Monomer. Requires Mg(2+) as cofactor.

It carries out the reaction adenosine(37) in tRNA + dimethylallyl diphosphate = N(6)-dimethylallyladenosine(37) in tRNA + diphosphate. Functionally, catalyzes the transfer of a dimethylallyl group onto the adenine at position 37 in tRNAs that read codons beginning with uridine, leading to the formation of N6-(dimethylallyl)adenosine (i(6)A). The protein is tRNA dimethylallyltransferase of Coxiella burnetii (strain CbuK_Q154) (Coxiella burnetii (strain Q154)).